The following is a 554-amino-acid chain: Glucose-6-phosphate isomerase (554 aa).

Glu-359 serves as the catalytic Proton donor. Active-site residues include His-390 and Lys-518.

This sequence belongs to the GPI family.

It localises to the cytoplasm. It catalyses the reaction alpha-D-glucose 6-phosphate = beta-D-fructose 6-phosphate. The protein operates within carbohydrate biosynthesis; gluconeogenesis. It functions in the pathway carbohydrate degradation; glycolysis; D-glyceraldehyde 3-phosphate and glycerone phosphate from D-glucose: step 2/4. In terms of biological role, catalyzes the reversible isomerization of glucose-6-phosphate to fructose-6-phosphate. This is Glucose-6-phosphate isomerase from Pseudomonas putida (strain W619).